Consider the following 285-residue polypeptide: Pantothenate synthetase (285 aa).

30 to 37 provides a ligand contact to ATP; the sequence is MGNLHQGH. Residue H37 is the Proton donor of the active site. Q61 provides a ligand contact to (R)-pantoate. Q61 lines the beta-alanine pocket. 149-152 is a binding site for ATP; that stretch reads GQKD. Q155 is a (R)-pantoate binding site. ATP contacts are provided by residues V178 and 186–189; that span reads LSSR.

Belongs to the pantothenate synthetase family. As to quaternary structure, homodimer.

It is found in the cytoplasm. The enzyme catalyses (R)-pantoate + beta-alanine + ATP = (R)-pantothenate + AMP + diphosphate + H(+). It functions in the pathway cofactor biosynthesis; (R)-pantothenate biosynthesis; (R)-pantothenate from (R)-pantoate and beta-alanine: step 1/1. Functionally, catalyzes the condensation of pantoate with beta-alanine in an ATP-dependent reaction via a pantoyl-adenylate intermediate. The chain is Pantothenate synthetase from Aeromonas hydrophila subsp. hydrophila (strain ATCC 7966 / DSM 30187 / BCRC 13018 / CCUG 14551 / JCM 1027 / KCTC 2358 / NCIMB 9240 / NCTC 8049).